Here is a 171-residue protein sequence, read N- to C-terminus: MIIYKDIITGDEMFSDIYKIKESENGMMIEVEGKMISRAEGEIDDALIGGNASAEVQDEGCESTTVSGVDIVLNHKLQETSYDKKSYTAYIKDYMKAVKAKLQEVAPDRVDPFMANAPAEVKKILGNIKNFQFFTGESMNPDGMIGLLDFREDGVTPYMLFFKDGLEIEKC.

The region spanning 1 to 171 (MIIYKDIITG…FKDGLEIEKC (171 aa)) is the TCTP domain.

The protein belongs to the TCTP family.

It localises to the cytoplasm. Involved in calcium binding and microtubule stabilization. This Labeo rohita (Indian major carp) protein is Translationally-controlled tumor protein homolog (tpt1).